Reading from the N-terminus, the 190-residue chain is Putative protein p47 (190 aa).

In Escherichia coli (Bacteriophage APSE-1), this protein is Putative protein p47 (47).